An 815-amino-acid chain; its full sequence is SNF1 protein kinase subunit beta-1 (815 aa).

Over residues 1–11 (MGNSPSTQDPS) the composition is skewed to polar residues. Disordered stretches follow at residues 1–88 (MGNS…TIDK) and 117–146 (SDDHDVGAPEEQVKSPSFLSPGPSMATVKR). G2 is lipidated: N-myristoyl glycine. Positions 12-31 (HSTKKEHGHHFHDAFNKDRQ) are enriched in basic and acidic residues. Over residues 32–42 (GSITSQLFNNR) the composition is skewed to polar residues. At S33 the chain carries Phosphoserine. 2 stretches are compositionally biased toward basic and acidic residues: residues 72 to 88 (PSTDCDGRMSSDTTIDK) and 117 to 129 (SDDHDVGAPEEQV). 6 positions are modified to phosphoserine: S181, S198, S200, S206, S209, and S220. 2 disordered regions span residues 311–335 (HANNNGNIENNTRNKGNAGGSNDDF) and 362–389 (KHHNKTKKAQNKKIRSVSNSRRSSFASL). Residues 313–326 (NNNGNIENNTRNKG) show a composition bias toward low complexity. The residue at position 331 (S331) is a Phosphoserine. A compositionally biased stretch (basic residues) spans 363–376 (HHNKTKKAQNKKIR). Low complexity predominate over residues 377–389 (SVSNSRRSSFASL). Residues 473–716 (VSTDIASALK…LQQGGNIDAE (244 aa)) form a kinase-interacting sequence (KIS); required for interaction with SNF1 region. A phosphoserine mark is found at S494 and S497. The segment at 581-616 (EPTLDEELPKRPELKRFPSSSRKSSYYSAKGVERPS) is disordered. Over residues 587–596 (ELPKRPELKR) the composition is skewed to basic and acidic residues. Residues 599 to 608 (SSSRKSSYYS) are compositionally biased toward low complexity. Phosphoserine is present on S643. The interval 724 to 804 (SRYPVPDLPI…FITQVVYAPC (81 aa)) is association with SNF1 kinase complex (ASC) domain; required for interaction with SNF4.

This sequence belongs to the 5'-AMP-activated protein kinase beta subunit family. As to quaternary structure, component of the SNF1 kinase complex, a heterotrimeric complex composed of the catalytic alpha subunit SNF1, one of the three related beta subunits SIP1, SIP2 or GAL83, and the regulatory gamma subunit SNF4. The beta subunit serves as a bridge between the catalytic and the regulatory subunit. Interacts (via KIS domain) with SNF1. Interacts (via ASC domain) with SNF4. In terms of processing, phosphorylated by SNF1 in vitro.

The protein resides in the cytoplasm. It localises to the vacuole membrane. Its function is as follows. Beta subunit of the SNF1 kinase complex, which is required for transcriptional, metabolic, and developmental adaptations in response to glucose limitation. Has a structural role, mediating heterotrimer formation, and a regulatory role, defining carbon source-regulated subcellular location and substrate specificity of the SNF1 kinase complex. Promotes the PKA-regulated relocalization of the SNF1 kinase complex to the vacuolar membrane in response to various types of carbon stress. The sequence is that of SNF1 protein kinase subunit beta-1 (SIP1) from Saccharomyces cerevisiae (strain ATCC 204508 / S288c) (Baker's yeast).